A 1051-amino-acid polypeptide reads, in one-letter code: Kinesin-like protein KIN-4B (1051 aa).

Residues 1–21 are disordered; it reads MESHSSLSSSSSSSPPSSLSS. The Kinesin motor domain occupies 25 to 380; it reads CVKVAVNVRP…LKYANRARNI (356 aa). 104–111 lines the ATP pocket; it reads GQTGSGKT. Coiled-coil stretches lie at residues 414-448 and 540-644; these read ATSS…RSKR and RQHF…KMKQ. Residues 916 to 925 are compositionally biased toward low complexity; the sequence is SSSYSGSSRS. Disordered regions lie at residues 916 to 946 and 1029 to 1051; these read SSSY…SSTY and MSKS…FQGA.

Belongs to the TRAFAC class myosin-kinesin ATPase superfamily. Kinesin family. KIN-4 subfamily. In terms of assembly, homodimer.

Kinesin-like motor protein involved in the control of the oriented deposition of cellulose microfibrils. In Arabidopsis thaliana (Mouse-ear cress), this protein is Kinesin-like protein KIN-4B.